We begin with the raw amino-acid sequence, 133 residues long: Basic leucine zipper transcriptional factor ATF-like 3 (133 aa).

The tract at residues 1-68 (MSQGPPAGGV…EHESLEQENS (68 aa)) is disordered. 2 positions are modified to phosphoserine: serine 2 and serine 24. The segment covering 11–24 (LQSSVAAPGNQPQS) has biased composition (polar residues). The bZIP domain maps to 28–91 (DDRKVRRREK…RHLTEALKEH (64 aa)). The segment at 30–55 (RKVRRREKNRVAAQRSRKKQTQKSDK) is basic motif. Residues 51–68 (QKSDKLHEEHESLEQENS) show a composition bias toward basic and acidic residues. Residues 56-84 (LHEEHESLEQENSVLRREIAKLKEELRHL) form a leucine-zipper region.

Belongs to the bZIP family. As to quaternary structure, heterodimer; heterodimerizes with JUN family proteins. Interacts with JUN. As to expression, ubiquitously expressed.

The protein localises to the nucleus. AP-1 family transcription factor that controls the differentiation of CD8(+) thymic conventional dendritic cells in the immune system. Acts via the formation of a heterodimer with JUN family proteins that recognizes and binds DNA sequence 5'-TGA[CG]TCA-3' and regulates expression of target genes. Required for development of CD8-alpha(+) classical dendritic cells (cDCs) and related CD103(+) dendritic cells that cross-present antigens to CD8 T-cells and produce interleukin-12 (IL12) in response to pathogens. The sequence is that of Basic leucine zipper transcriptional factor ATF-like 3 (Batf3) from Rattus norvegicus (Rat).